The following is a 181-amino-acid chain: ATP synthase subunit delta (181 aa).

This sequence belongs to the ATPase delta chain family. As to quaternary structure, F-type ATPases have 2 components, F(1) - the catalytic core - and F(0) - the membrane proton channel. F(1) has five subunits: alpha(3), beta(3), gamma(1), delta(1), epsilon(1). F(0) has three main subunits: a(1), b(2) and c(10-14). The alpha and beta chains form an alternating ring which encloses part of the gamma chain. F(1) is attached to F(0) by a central stalk formed by the gamma and epsilon chains, while a peripheral stalk is formed by the delta and b chains.

It is found in the cell inner membrane. F(1)F(0) ATP synthase produces ATP from ADP in the presence of a proton or sodium gradient. F-type ATPases consist of two structural domains, F(1) containing the extramembraneous catalytic core and F(0) containing the membrane proton channel, linked together by a central stalk and a peripheral stalk. During catalysis, ATP synthesis in the catalytic domain of F(1) is coupled via a rotary mechanism of the central stalk subunits to proton translocation. Functionally, this protein is part of the stalk that links CF(0) to CF(1). It either transmits conformational changes from CF(0) to CF(1) or is implicated in proton conduction. This chain is ATP synthase subunit delta, found in Chlorobium phaeobacteroides (strain DSM 266 / SMG 266 / 2430).